A 216-amino-acid chain; its full sequence is Thiamine-phosphate synthase (216 aa).

Residues 41-45 (QYREK) and Asn73 each bind 4-amino-2-methyl-5-(diphosphooxymethyl)pyrimidine. Residues Asp74 and Asp93 each coordinate Mg(2+). Ser111 contributes to the 4-amino-2-methyl-5-(diphosphooxymethyl)pyrimidine binding site. 2-[(2R,5Z)-2-carboxy-4-methylthiazol-5(2H)-ylidene]ethyl phosphate is bound at residue 137-139 (TTT). Residue Lys140 coordinates 4-amino-2-methyl-5-(diphosphooxymethyl)pyrimidine. Residues Gly168 and 188–189 (VS) contribute to the 2-[(2R,5Z)-2-carboxy-4-methylthiazol-5(2H)-ylidene]ethyl phosphate site.

Belongs to the thiamine-phosphate synthase family. It depends on Mg(2+) as a cofactor.

It catalyses the reaction 2-[(2R,5Z)-2-carboxy-4-methylthiazol-5(2H)-ylidene]ethyl phosphate + 4-amino-2-methyl-5-(diphosphooxymethyl)pyrimidine + 2 H(+) = thiamine phosphate + CO2 + diphosphate. It carries out the reaction 2-(2-carboxy-4-methylthiazol-5-yl)ethyl phosphate + 4-amino-2-methyl-5-(diphosphooxymethyl)pyrimidine + 2 H(+) = thiamine phosphate + CO2 + diphosphate. The catalysed reaction is 4-methyl-5-(2-phosphooxyethyl)-thiazole + 4-amino-2-methyl-5-(diphosphooxymethyl)pyrimidine + H(+) = thiamine phosphate + diphosphate. It functions in the pathway cofactor biosynthesis; thiamine diphosphate biosynthesis; thiamine phosphate from 4-amino-2-methyl-5-diphosphomethylpyrimidine and 4-methyl-5-(2-phosphoethyl)-thiazole: step 1/1. Functionally, condenses 4-methyl-5-(beta-hydroxyethyl)thiazole monophosphate (THZ-P) and 2-methyl-4-amino-5-hydroxymethyl pyrimidine pyrophosphate (HMP-PP) to form thiamine monophosphate (TMP). The protein is Thiamine-phosphate synthase of Chloroflexus aurantiacus (strain ATCC 29366 / DSM 635 / J-10-fl).